A 409-amino-acid chain; its full sequence is MAFGKSLFHAIGRVSLVRQIAAGLALGIVIGSVSPQLGLAAGLFGSLFVGALKAVAPVLVFILVAATIAQHQKGNKAHIRPIIVLYLIGTFSAALTAVIAGMVFPTHIVLAGAGDVSAAPPSGIVEVLKSLLMNLVANPINAIANANYIGILAWALVLGAALRNHGSDVTRQVVADLAEAVSTVVKWIIRFAPLGIFGLVSSTIAETGFGALAGYAKLLAVLLGCMAFIALAVNPAIVWWKIRRNPFPLVFTCLRESGVYAFFTRSSAANIPVNMALAKKLGLHEDTYSISIPLGATINMAGAAITITVLAMAAAHTQGITVDFATALLLSLVATVSACGASGVAGGSLLLIPLACSLFGIDNDVAMQVVAVGFIIGVIQDSAETALNSSTDVLFTAAADLGRQRNRAE.

The next 8 membrane-spanning stretches (helical) occupy residues 24 to 44 (LALG…AGLF), 48 to 68 (FVGA…AATI), 82 to 102 (IIVL…IAGM), 142 to 162 (AIAN…GAAL), 194 to 214 (LGIF…ALAG), 218 to 238 (LLAV…PAIV), 292 to 312 (IPLG…VLAM), and 319 to 339 (GITV…VSAC).

Belongs to the dicarboxylate/amino acid:cation symporter (DAACS) (TC 2.A.23) family.

It localises to the cell inner membrane. The catalysed reaction is L-serine(in) + Na(+)(in) = L-serine(out) + Na(+)(out). The enzyme catalyses L-threonine(in) + Na(+)(in) = L-threonine(out) + Na(+)(out). In terms of biological role, involved in the import of serine and threonine into the cell, with the concomitant import of sodium (symport system). The protein is Serine/threonine transporter SstT of Neisseria meningitidis serogroup B (strain ATCC BAA-335 / MC58).